The sequence spans 467 residues: Probable receptor-like protein kinase At3g17420 (467 aa).

The N-terminal stretch at 1–35 (MTSQLKRTLTKRYGVLELWEIIVIALFAAFIVILV) is a signal peptide. Over 36–123 (LSVWLSFRKK…LPPSTPSTTA (88 aa)) the chain is Extracellular. Asparagine 50 is a glycosylation site (N-linked (GlcNAc...) asparagine). A Phosphoserine modification is found at serine 70. An N-linked (GlcNAc...) asparagine glycan is attached at asparagine 79. Residues 102–126 (GSLEKKPLVGSHLPPSTPSTTAPSP) are disordered. The chain crosses the membrane as a helical span at residues 124–144 (PSPLLGLPEVSHIGWGHWFTL). Over 145-467 (RDLQLATNHF…DNDITTDAKI (323 aa)) the chain is Cytoplasmic. In terms of domain architecture, Protein kinase spans 154-433 (FSKESIIGDG…MLESDEYPVM (280 aa)). Residues 160 to 168 (IGDGGYGVV) and lysine 182 each bind ATP. Tyrosine 227 carries the phosphotyrosine modification. Aspartate 280 serves as the catalytic Proton acceptor. Residues serine 284 and serine 313 each carry the phosphoserine modification. Threonine 314 and threonine 319 each carry phosphothreonine. Tyrosine 327 carries the post-translational modification Phosphotyrosine. A disordered region spans residues 413–467 (DKRPKMSQVARMLESDEYPVMPREERRRRRNQNAETHRESTDTNKDNDITTDAKI). Basic and acidic residues predominate over residues 447 to 467 (ETHRESTDTNKDNDITTDAKI).

This sequence belongs to the protein kinase superfamily. Ser/Thr protein kinase family.

The protein resides in the cell membrane. The enzyme catalyses L-seryl-[protein] + ATP = O-phospho-L-seryl-[protein] + ADP + H(+). It catalyses the reaction L-threonyl-[protein] + ATP = O-phospho-L-threonyl-[protein] + ADP + H(+). This is Probable receptor-like protein kinase At3g17420 from Arabidopsis thaliana (Mouse-ear cress).